The following is a 285-amino-acid chain: Pantothenate synthetase (285 aa).

30–37 (MGFLHEGH) contacts ATP. Histidine 37 functions as the Proton donor in the catalytic mechanism. (R)-pantoate is bound at residue glutamine 61. Glutamine 61 contributes to the beta-alanine binding site. 147 to 150 (GQKD) contributes to the ATP binding site. Glutamine 153 is a (R)-pantoate binding site. ATP contacts are provided by residues valine 176 and 184–187 (KSSR).

This sequence belongs to the pantothenate synthetase family. In terms of assembly, homodimer.

Its subcellular location is the cytoplasm. The catalysed reaction is (R)-pantoate + beta-alanine + ATP = (R)-pantothenate + AMP + diphosphate + H(+). Its pathway is cofactor biosynthesis; (R)-pantothenate biosynthesis; (R)-pantothenate from (R)-pantoate and beta-alanine: step 1/1. Functionally, catalyzes the condensation of pantoate with beta-alanine in an ATP-dependent reaction via a pantoyl-adenylate intermediate. The chain is Pantothenate synthetase from Listeria monocytogenes serovar 1/2a (strain ATCC BAA-679 / EGD-e).